A 251-amino-acid chain; its full sequence is Triosephosphate isomerase (251 aa).

Residue 9–11 (NWK) coordinates substrate. H95 serves as the catalytic Electrophile. E167 serves as the catalytic Proton acceptor. Substrate is bound by residues G173, S212, and 233-234 (GG).

Belongs to the triosephosphate isomerase family. Homodimer.

Its subcellular location is the cytoplasm. It carries out the reaction D-glyceraldehyde 3-phosphate = dihydroxyacetone phosphate. It participates in carbohydrate biosynthesis; gluconeogenesis. The protein operates within carbohydrate degradation; glycolysis; D-glyceraldehyde 3-phosphate from glycerone phosphate: step 1/1. Its function is as follows. Involved in the gluconeogenesis. Catalyzes stereospecifically the conversion of dihydroxyacetone phosphate (DHAP) to D-glyceraldehyde-3-phosphate (G3P). The sequence is that of Triosephosphate isomerase from Pseudomonas syringae pv. tomato (strain ATCC BAA-871 / DC3000).